We begin with the raw amino-acid sequence, 216 residues long: uncharacterized protein (216 aa).

The region spanning 8–63 is the HTH cro/C1-type domain; the sequence is LKTLMTSVHINASELARRTGIAQPIIHRLSTGQNTNPKLATIKPIARYFMVNISQL. The segment at residues 19–38 is a DNA-binding region (H-T-H motif); it reads ASELARRTGIAQPIIHRLST.

This is an uncharacterized protein from Coxiella burnetii (strain RSA 493 / Nine Mile phase I).